We begin with the raw amino-acid sequence, 1009 residues long: Putative receptor-like protein 8 (1009 aa).

The signal sequence occupies residues 1–22; sequence MKTNFVILLLLLCVFAISPSQQ. Over 23–961 the chain is Extracellular; that stretch reads EEINQHNPGI…EEDDEAPVDM (939 aa). N-linked (GlcNAc...) asparagine glycans are attached at residues asparagine 159 and asparagine 197. One copy of the LRR 1; degenerate repeat lies at 204–231; sequence FEEVRSLELSAGLNGFVDNVEGYKSLRK. LRR repeat units follow at residues 232-255, 257-281, 282-305, 306-329, 331-354, 355-377, 379-402, 404-427, 442-465, 466-490, 492-514, 515-538, 540-565, 567-587, 588-612, 613-636, 638-660, 662-681, 682-705, 707-728, 729-752, 819-842, 843-866, 867-891, and 893-916; these read LKNL…PFIN, ATSL…EIKD, LTNL…LTHL, KKLK…VVCE, KNLW…LGRL, NKLR…TFNR, ESLE…PLAN, TKLK…SEPK, LEKI…ATIV, HELQ…GYAL, NLLR…MGEM, VNIT…FVTG, FSLK…SFTS, EELR…LLSS, NTTL…MSNL, SGLT…LLAI, FLSL…VGGE, GIKL…DTLL, EKVQ…VNTE, IYIL…LCDL, RNIR…LYNL, LDYM…ELGS, LSKL…SFSN, LKDI…LTNL, and SLVV…QFNT. Asparagine 267 carries an N-linked (GlcNAc...) asparagine glycan. Asparagine 390 and asparagine 402 each carry an N-linked (GlcNAc...) asparagine glycan. Asparagine 497, asparagine 516, asparagine 526, and asparagine 551 each carry an N-linked (GlcNAc...) asparagine glycan. N-linked (GlcNAc...) asparagine glycosylation is found at asparagine 588 and asparagine 611. Asparagine 716 and asparagine 751 each carry an N-linked (GlcNAc...) asparagine glycan. 4 N-linked (GlcNAc...) asparagine glycosylation sites follow: asparagine 850, asparagine 890, asparagine 903, and asparagine 934. The interval 934-955 is disordered; it reads NRSCDAKKTSDESENGGEEEDD. Positions 945-955 are enriched in acidic residues; sequence ESENGGEEEDD. The chain crosses the membrane as a helical span at residues 962–982; that stretch reads LAFYFSSASTYVTTLIGIFIL. Topologically, residues 983-1009 are cytoplasmic; that stretch reads MCFDCPLRRAWLRIVDASIASVKSMLP.

It belongs to the RLP family.

It localises to the cell membrane. This is Putative receptor-like protein 8 from Arabidopsis thaliana (Mouse-ear cress).